The sequence spans 182 residues: Crossover junction endodeoxyribonuclease RuvC (182 aa).

Active-site residues include Asp-7, Glu-67, and Asp-139. Mg(2+) contacts are provided by Asp-7, Glu-67, and Asp-139.

Belongs to the RuvC family. Homodimer which binds Holliday junction (HJ) DNA. The HJ becomes 2-fold symmetrical on binding to RuvC with unstacked arms; it has a different conformation from HJ DNA in complex with RuvA. In the full resolvosome a probable DNA-RuvA(4)-RuvB(12)-RuvC(2) complex forms which resolves the HJ. It depends on Mg(2+) as a cofactor.

It is found in the cytoplasm. It catalyses the reaction Endonucleolytic cleavage at a junction such as a reciprocal single-stranded crossover between two homologous DNA duplexes (Holliday junction).. Its function is as follows. The RuvA-RuvB-RuvC complex processes Holliday junction (HJ) DNA during genetic recombination and DNA repair. Endonuclease that resolves HJ intermediates. Cleaves cruciform DNA by making single-stranded nicks across the HJ at symmetrical positions within the homologous arms, yielding a 5'-phosphate and a 3'-hydroxyl group; requires a central core of homology in the junction. The consensus cleavage sequence is 5'-(A/T)TT(C/G)-3'. Cleavage occurs on the 3'-side of the TT dinucleotide at the point of strand exchange. HJ branch migration catalyzed by RuvA-RuvB allows RuvC to scan DNA until it finds its consensus sequence, where it cleaves and resolves the cruciform DNA. The sequence is that of Crossover junction endodeoxyribonuclease RuvC from Bordetella parapertussis (strain 12822 / ATCC BAA-587 / NCTC 13253).